The chain runs to 603 residues: Alpha-1,2-mannosyltransferase algn-9 (603 aa).

Positions 1–25 are disordered; it reads MVTHRRKGGSGPPQKPPPRIVDRSS. Topologically, residues 1 to 108 are lumenal; that stretch reads MVTHRRKGGS…EYSPVYAIRS (108 aa). Residues 109–129 traverse the membrane as a helical segment; that stretch reads YFYIYLHYIPASLFANLFGDT. Residue K130 is a topological domain, cytoplasmic. A helical membrane pass occupies residues 131 to 151; the sequence is IVVFTLIRLTIGLFCLLGEYY. Residues 152 to 166 are Lumenal-facing; the sequence is AFDAICKKINIATGR. Residues 167–187 traverse the membrane as a helical segment; the sequence is FFILFSIFSSGMFLASTAFVP. Over 188–195 the chain is Cytoplasmic; sequence SSFCMAIT. Residues 196–216 traverse the membrane as a helical segment; that stretch reads FYILGAYLNENWTAGIFCVAF. The Lumenal segment spans residues 217-218; sequence ST. Residues 219–239 traverse the membrane as a helical segment; it reads MVGWPFSAVLGLPIVADMLLL. The Cytoplasmic portion of the chain corresponds to 240 to 245; sequence KGLRIR. Residues 246–266 form a helical membrane-spanning segment; the sequence is FILTSLVIGLCIGGVQVITDS. Over 267–310 the chain is Lumenal; that stretch reads HYFGKTVLAPLNIFLYNVVSGPGPSLYGEEPLSFYIKNLFNNWN. Residues 311–331 traverse the membrane as a helical segment; that stretch reads IVIFAAPFGFPLSLAYFTKVW. Topologically, residues 332–343 are cytoplasmic; it reads MSQDRNVALYQR. The helical transmembrane segment at 344–364 threads the bilayer; it reads FAPIILLAVTTAAWLLIFGSQ. The Lumenal segment spans residues 365–370; it reads AHKEER. A helical transmembrane segment spans residues 371–391; sequence FLFPIYPFIAFFAALALDATN. At 392–397 the chain is on the cytoplasmic side; sequence RLCLKK. The chain crosses the membrane as a helical span at residues 398–418; it reads LGMDNILSILFILCFAILSAS. Residues 419-603 lie on the Lumenal side of the membrane; sequence RTYSIHNNYG…TCTLYRKSNL (185 aa). N443 carries N-linked (GlcNAc...) asparagine glycosylation.

It belongs to the glycosyltransferase 22 family.

It is found in the endoplasmic reticulum membrane. It carries out the reaction an alpha-D-Man-(1-&gt;2)-alpha-D-Man-(1-&gt;2)-alpha-D-Man-(1-&gt;3)-[alpha-D-Man-(1-&gt;3)-alpha-D-Man-(1-&gt;6)]-beta-D-Man-(1-&gt;4)-beta-D-GlcNAc-(1-&gt;4)-alpha-D-GlcNAc-diphospho-di-trans,poly-cis-dolichol + a di-trans,poly-cis-dolichyl beta-D-mannosyl phosphate = an alpha-D-Man-(1-&gt;2)-alpha-D-Man-(1-&gt;2)-alpha-D-Man-(1-&gt;3)-[alpha-D-Man-(1-&gt;2)-alpha-D-Man-(1-&gt;3)-alpha-D-Man-(1-&gt;6)]-beta-D-Man-(1-&gt;4)-beta-D-GlcNAc-(1-&gt;4)-alpha-D-GlcNAc-diphospho-di-trans,poly-cis-dolichol + a di-trans,poly-cis-dolichyl phosphate + H(+). The enzyme catalyses an alpha-D-Man-(1-&gt;2)-alpha-D-Man-(1-&gt;2)-alpha-D-Man-(1-&gt;3)-[alpha-D-Man-(1-&gt;2)-alpha-D-Man-(1-&gt;3)-[alpha-D-Man-(1-&gt;6)]-alpha-D-Man-(1-&gt;6)]-beta-D-Man-(1-&gt;4)-beta-D-GlcNAc-(1-&gt;4)-alpha-D-GlcNAc-diphospho-di-trans,poly-cis-dolichol + a di-trans,poly-cis-dolichyl beta-D-mannosyl phosphate = an alpha-D-Man-(1-&gt;2)-alpha-D-Man-(1-&gt;2)-alpha-D-Man-(1-&gt;3)-[alpha-D-Man-(1-&gt;2)-alpha-D-Man-(1-&gt;3)-[alpha-D-Man-(1-&gt;2)-alpha-D-Man-(1-&gt;6)]-alpha-D-Man-(1-&gt;6)]-beta-D-Man-(1-&gt;4)-beta-D-GlcNAc-(1-&gt;4)-alpha-D-GlcNAc-diphospho-di-trans,poly-cis-dolichol + a di-trans,poly-cis-dolichyl phosphate + H(+). The protein operates within protein modification; protein glycosylation. Functionally, catalyzes the transfer of mannose from Dol-P-Man to lipid-linked oligosaccharides. The protein is Alpha-1,2-mannosyltransferase algn-9 of Caenorhabditis elegans.